A 244-amino-acid polypeptide reads, in one-letter code: tRNA (guanine-N(1)-)-methyltransferase (244 aa).

Residues glycine 113 and 132–137 (IGDYVL) contribute to the S-adenosyl-L-methionine site.

Belongs to the RNA methyltransferase TrmD family. Homodimer.

The protein localises to the cytoplasm. The catalysed reaction is guanosine(37) in tRNA + S-adenosyl-L-methionine = N(1)-methylguanosine(37) in tRNA + S-adenosyl-L-homocysteine + H(+). Specifically methylates guanosine-37 in various tRNAs. The chain is tRNA (guanine-N(1)-)-methyltransferase from Shouchella clausii (strain KSM-K16) (Alkalihalobacillus clausii).